Here is a 152-residue protein sequence, read N- to C-terminus: Ribosome maturation factor RimP (152 aa).

The protein belongs to the RimP family.

The protein localises to the cytoplasm. Functionally, required for maturation of 30S ribosomal subunits. The protein is Ribosome maturation factor RimP of Rubrobacter xylanophilus (strain DSM 9941 / JCM 11954 / NBRC 16129 / PRD-1).